Reading from the N-terminus, the 445-residue chain is tRNA-2-methylthio-N(6)-dimethylallyladenosine synthase (445 aa).

Residues Lys-3 to Arg-124 form the MTTase N-terminal domain. Residues Cys-12, Cys-48, Cys-87, Cys-162, Cys-166, and Cys-169 each contribute to the [4Fe-4S] cluster site. Residues Tyr-148–Ala-380 form the Radical SAM core domain. Residues Gln-383–Leu-445 enclose the TRAM domain.

The protein belongs to the methylthiotransferase family. MiaB subfamily. In terms of assembly, monomer. It depends on [4Fe-4S] cluster as a cofactor.

It localises to the cytoplasm. The catalysed reaction is N(6)-dimethylallyladenosine(37) in tRNA + (sulfur carrier)-SH + AH2 + 2 S-adenosyl-L-methionine = 2-methylsulfanyl-N(6)-dimethylallyladenosine(37) in tRNA + (sulfur carrier)-H + 5'-deoxyadenosine + L-methionine + A + S-adenosyl-L-homocysteine + 2 H(+). Catalyzes the methylthiolation of N6-(dimethylallyl)adenosine (i(6)A), leading to the formation of 2-methylthio-N6-(dimethylallyl)adenosine (ms(2)i(6)A) at position 37 in tRNAs that read codons beginning with uridine. In Rickettsia prowazekii (strain Madrid E), this protein is tRNA-2-methylthio-N(6)-dimethylallyladenosine synthase.